The following is a 242-amino-acid chain: NAD(P)H-quinone oxidoreductase subunit K (242 aa).

[4Fe-4S] cluster-binding residues include C60, C61, C125, and C156.

It belongs to the complex I 20 kDa subunit family. As to quaternary structure, NDH-1 can be composed of about 15 different subunits; different subcomplexes with different compositions have been identified which probably have different functions. Requires [4Fe-4S] cluster as cofactor.

Its subcellular location is the cellular thylakoid membrane. It catalyses the reaction a plastoquinone + NADH + (n+1) H(+)(in) = a plastoquinol + NAD(+) + n H(+)(out). The enzyme catalyses a plastoquinone + NADPH + (n+1) H(+)(in) = a plastoquinol + NADP(+) + n H(+)(out). NDH-1 shuttles electrons from an unknown electron donor, via FMN and iron-sulfur (Fe-S) centers, to quinones in the respiratory and/or the photosynthetic chain. The immediate electron acceptor for the enzyme in this species is believed to be plastoquinone. Couples the redox reaction to proton translocation, and thus conserves the redox energy in a proton gradient. Cyanobacterial NDH-1 also plays a role in inorganic carbon-concentration. This Prochlorococcus marinus (strain SARG / CCMP1375 / SS120) protein is NAD(P)H-quinone oxidoreductase subunit K.